Consider the following 290-residue polypeptide: Phosphoribosylaminoimidazole-succinocarboxamide synthase (290 aa).

The protein belongs to the SAICAR synthetase family.

The catalysed reaction is 5-amino-1-(5-phospho-D-ribosyl)imidazole-4-carboxylate + L-aspartate + ATP = (2S)-2-[5-amino-1-(5-phospho-beta-D-ribosyl)imidazole-4-carboxamido]succinate + ADP + phosphate + 2 H(+). The protein operates within purine metabolism; IMP biosynthesis via de novo pathway; 5-amino-1-(5-phospho-D-ribosyl)imidazole-4-carboxamide from 5-amino-1-(5-phospho-D-ribosyl)imidazole-4-carboxylate: step 1/2. This is Phosphoribosylaminoimidazole-succinocarboxamide synthase from Haemophilus influenzae (strain PittGG).